The primary structure comprises 661 residues: DNA-directed RNA polymerase subunit beta' (661 aa).

Residues C69, C71, C87, and C90 each contribute to the Zn(2+) site. Mg(2+)-binding residues include D489, D491, and D493.

The protein belongs to the RNA polymerase beta' chain family. RpoC1 subfamily. As to quaternary structure, in plastids the minimal PEP RNA polymerase catalytic core is composed of four subunits: alpha, beta, beta', and beta''. When a (nuclear-encoded) sigma factor is associated with the core the holoenzyme is formed, which can initiate transcription. Mg(2+) is required as a cofactor. The cofactor is Zn(2+).

Its subcellular location is the plastid. It is found in the chloroplast. It carries out the reaction RNA(n) + a ribonucleoside 5'-triphosphate = RNA(n+1) + diphosphate. DNA-dependent RNA polymerase catalyzes the transcription of DNA into RNA using the four ribonucleoside triphosphates as substrates. This Chaetosphaeridium globosum (Charophycean green alga) protein is DNA-directed RNA polymerase subunit beta'.